Reading from the N-terminus, the 164-residue chain is Small ribosomal subunit protein uS5 (164 aa).

Residues 10–73 (LEERVVAINR…EDAKKNLIEV (64 aa)) enclose the S5 DRBM domain.

The protein belongs to the universal ribosomal protein uS5 family. As to quaternary structure, part of the 30S ribosomal subunit. Contacts proteins S4 and S8.

Its function is as follows. With S4 and S12 plays an important role in translational accuracy. Functionally, located at the back of the 30S subunit body where it stabilizes the conformation of the head with respect to the body. The sequence is that of Small ribosomal subunit protein uS5 from Streptococcus gordonii (strain Challis / ATCC 35105 / BCRC 15272 / CH1 / DL1 / V288).